Reading from the N-terminus, the 164-residue chain is Transcription antitermination protein NusB (164 aa).

It belongs to the NusB family.

Involved in transcription antitermination. Required for transcription of ribosomal RNA (rRNA) genes. Binds specifically to the boxA antiterminator sequence of the ribosomal RNA (rrn) operons. The polypeptide is Transcription antitermination protein NusB (Chlamydia muridarum (strain MoPn / Nigg)).